Consider the following 66-residue polypeptide: Large ribosomal subunit protein bL35 (66 aa).

Basic residues predominate over residues Met-1–His-26. A disordered region spans residues Met-1–Thr-48.

This sequence belongs to the bacterial ribosomal protein bL35 family.

This Geobacillus sp. (strain WCH70) protein is Large ribosomal subunit protein bL35.